A 795-amino-acid chain; its full sequence is Protocadherin beta-12 (795 aa).

An N-terminal signal peptide occupies residues 1-26 (MENGGAGTLQIRQVLLFFVLLGMSQA). Topologically, residues 27 to 690 (GSETGNFLVM…AQADSLTVYL (664 aa)) are extracellular. 5 consecutive Cadherin domains span residues 35 to 133 (VMEE…SPVF), 138 to 242 (MLLE…SPEF), 247 to 347 (YEVK…APEI), 352 to 451 (ITSP…APAF), and 456 to 561 (YALF…SPFV). N-linked (GlcNAc...) asparagine glycosylation is found at asparagine 418, asparagine 436, asparagine 487, and asparagine 567. In terms of domain architecture, Cadherin 6 spans 568-671 (GSAPCTELVP…LVDGFSQPYL (104 aa)). Residues 691 to 711 (VVALASVSSLFLFSVLLFVAV) traverse the membrane as a helical segment. Residues 712–795 (RLCRRSRAAP…NPPFQNNLGF (84 aa)) lie on the Cytoplasmic side of the membrane.

Its subcellular location is the cell membrane. In terms of biological role, potential calcium-dependent cell-adhesion protein. May be involved in the establishment and maintenance of specific neuronal connections in the brain. The protein is Protocadherin beta-12 (PCDHB12) of Homo sapiens (Human).